A 905-amino-acid polypeptide reads, in one-letter code: Gamma-tubulin complex component 2 (905 aa).

A Phosphotyrosine modification is found at Y83. The segment at 877–905 (AERSQKAAPQVPVPRGPSAPAPRVAIPAQ) is disordered. Over residues 887-896 (VPVPRGPSAP) the composition is skewed to pro residues.

It belongs to the TUBGCP family. Component of the gamma-tubulin ring complex (gTuRC) consisting of TUBGCP2, TUBGCP3, TUBGCP4, TUBGCP5 and TUBGCP6 and gamma-tubulin TUBG1 or TUBG2. TUBGCP2, TUBGCP3, TUBGCP4, TUBGCP5 and TUBGCP6 assemble in a 5:5:2:1:1 stoichiometry; each is associated with a gamma-tubulin, thereby arranging 14 gamma-tubulins in a helical manner. Gamma-tubulin at the first position is blocked by TUBGCP3 at the last position, allowing 13 protafilaments to grow into a microtubule. The gTuRC (via TUBGCP3 and TUBGCP6) interacts with ACTB and MZT1; the interactions form a luminal bridge that stabilizes the initial structure during complex assembly. The gTuRC (via TUBGCP2) interacts with MZT2A/MZT2B and CDK5RAP2 (via CM1 motif); the interactions play a role in gTuRC activation. Interacts with ATF5; the ATF5:PCNT:polyglutamylated tubulin (PGT) tripartite unites the mother centriole and the pericentriolar material (PCM) in the centrosome.

It localises to the cytoplasm. The protein resides in the cytoskeleton. It is found in the microtubule organizing center. Its subcellular location is the centrosome. In terms of biological role, component of the gamma-tubulin ring complex (gTuRC) which mediates microtubule nucleation. The gTuRC regulates the minus-end nucleation of alpha-beta tubulin heterodimers that grow into microtubule protafilaments, a critical step in centrosome duplication and spindle formation. Plays a role in neuronal migration. The chain is Gamma-tubulin complex component 2 (Tubgcp2) from Mus musculus (Mouse).